A 59-amino-acid chain; its full sequence is Large ribosomal subunit protein uL30 (59 aa).

Belongs to the universal ribosomal protein uL30 family. In terms of assembly, part of the 50S ribosomal subunit.

This chain is Large ribosomal subunit protein uL30, found in Herminiimonas arsenicoxydans.